The chain runs to 783 residues: Probable alpha,alpha-trehalose-phosphate synthase [UDP-forming] 3 (783 aa).

The interval glutamine 11 to aspartate 456 is glycosyltransferase.

This sequence in the N-terminal section; belongs to the glycosyltransferase 20 family. In the C-terminal section; belongs to the trehalose phosphatase family.

The enzyme catalyses D-glucose 6-phosphate + UDP-alpha-D-glucose = alpha,alpha-trehalose 6-phosphate + UDP + H(+). The polypeptide is Probable alpha,alpha-trehalose-phosphate synthase [UDP-forming] 3 (TPS3) (Arabidopsis thaliana (Mouse-ear cress)).